The chain runs to 428 residues: Enolase (428 aa).

A (2R)-2-phosphoglycerate-binding site is contributed by Gln-173. The active-site Proton donor is Glu-217. Asp-253, Glu-294, and Asp-320 together coordinate Mg(2+). (2R)-2-phosphoglycerate is bound by residues Lys-345, Arg-374, Ser-375, and Lys-396. Lys-345 acts as the Proton acceptor in catalysis.

Belongs to the enolase family. Requires Mg(2+) as cofactor.

It is found in the cytoplasm. It localises to the secreted. The protein resides in the cell surface. The catalysed reaction is (2R)-2-phosphoglycerate = phosphoenolpyruvate + H2O. It functions in the pathway carbohydrate degradation; glycolysis; pyruvate from D-glyceraldehyde 3-phosphate: step 4/5. Catalyzes the reversible conversion of 2-phosphoglycerate (2-PG) into phosphoenolpyruvate (PEP). It is essential for the degradation of carbohydrates via glycolysis. This is Enolase from Methanosarcina mazei (strain ATCC BAA-159 / DSM 3647 / Goe1 / Go1 / JCM 11833 / OCM 88) (Methanosarcina frisia).